The chain runs to 327 residues: MQHLQEIIANATSAINAAESLVALDEVRVQYLGKKGELTVQLQSLGKLPPEERRTAGQEINVAKEAVQKALAERKDALQSAELEAKLAAETIDVTLPGRRIENGGLHPVTRTIERIESFFGELGFTVESGPEIEDDFHNFDALNIAADHPARTDHDTFFFNPKLMLRTHTSGVQIRTLEERQPPLRFIAPGRVYRNDYDQTHTPMFHQVEGMLVDENVNFAQLKGILHDFLCNFFEEDLEVRFRPSYFPFTEPSAEVDVKGKNGKWLEVLGCGMVHPNVLRSVGIDPEKYSGFAFGMGVERLTMLRYGVNDLRAFFENDLRFLKQFK.

Glu252 is a binding site for Mg(2+).

It belongs to the class-II aminoacyl-tRNA synthetase family. Phe-tRNA synthetase alpha subunit type 1 subfamily. In terms of assembly, tetramer of two alpha and two beta subunits. It depends on Mg(2+) as a cofactor.

The protein resides in the cytoplasm. It catalyses the reaction tRNA(Phe) + L-phenylalanine + ATP = L-phenylalanyl-tRNA(Phe) + AMP + diphosphate + H(+). The polypeptide is Phenylalanine--tRNA ligase alpha subunit (Vibrio cholerae serotype O1 (strain ATCC 39541 / Classical Ogawa 395 / O395)).